Consider the following 417-residue polypeptide: Sterile alpha motif domain-containing protein 14 (417 aa).

2 disordered regions span residues 37–299 (LLAK…WQEA) and 388–417 (AAAEKERKAQEKAARQREKLRRREQEAKKS). Residues 40–49 (KGRRHRPSRS) are compositionally biased toward basic residues. Ser-84 and Ser-108 each carry phosphoserine. Residues 135 to 153 (AAASCSPPRSAPSSDSSPS) are compositionally biased toward low complexity. The span at 160–173 (RAEPHSEDDSRDAS) shows a compositional bias: basic and acidic residues. A phosphoserine mark is found at Ser-173 and Ser-179. Composition is skewed to low complexity over residues 244-260 (SGKGSASSGSTTSPTCS) and 276-295 (STLSDDSTPPSSSPKIPSGP). Ser-279 is modified (phosphoserine). Thr-283 is subject to Phosphothreonine. Residues 326–389 (WTSQQVGQWL…KRKLKEMAAA (64 aa)) enclose the SAM domain. The stretch at 377-417 (ALVKRKLKEMAAAAEKERKAQEKAARQREKLRRREQEAKKS) forms a coiled coil. Over residues 390–417 (AEKERKAQEKAARQREKLRRREQEAKKS) the composition is skewed to basic and acidic residues.

The protein is Sterile alpha motif domain-containing protein 14 (SAMD14) of Homo sapiens (Human).